We begin with the raw amino-acid sequence, 302 residues long: Sulfate adenylyltransferase subunit 2 (302 aa).

Belongs to the PAPS reductase family. CysD subfamily. In terms of assembly, heterodimer composed of CysD, the smaller subunit, and CysN.

It carries out the reaction sulfate + ATP + H(+) = adenosine 5'-phosphosulfate + diphosphate. Its pathway is sulfur metabolism; hydrogen sulfide biosynthesis; sulfite from sulfate: step 1/3. Its function is as follows. With CysN forms the ATP sulfurylase (ATPS) that catalyzes the adenylation of sulfate producing adenosine 5'-phosphosulfate (APS) and diphosphate, the first enzymatic step in sulfur assimilation pathway. APS synthesis involves the formation of a high-energy phosphoric-sulfuric acid anhydride bond driven by GTP hydrolysis by CysN coupled to ATP hydrolysis by CysD. The protein is Sulfate adenylyltransferase subunit 2 of Xanthomonas axonopodis pv. citri (strain 306).